We begin with the raw amino-acid sequence, 347 residues long: Homoisocitrate dehydrogenase (347 aa).

An NADH-binding site is contributed by 68 to 70 (ITS). S70 provides a ligand contact to (2R,3S)-homoisocitrate. Residue S81 is modified to Phosphoserine. R87, R97, R128, Y135, K181, and N183 together coordinate (2R,3S)-homoisocitrate. N183 serves as a coordination point for NADH. Mg(2+) is bound by residues D213, D237, and D241. Residues 270-274 (GSAPD) and N282 each bind NADH.

Belongs to the isocitrate and isopropylmalate dehydrogenases family. The cofactor is Mg(2+).

The catalysed reaction is (2R,3S)-homoisocitrate + NAD(+) = 2-oxoadipate + CO2 + NADH. The enzyme catalyses (2R,3S)-iso(homo)2citrate + NAD(+) = 2-oxoheptanedioate + CO2 + NADH. It catalyses the reaction (2R,3S)-iso(homo)3citrate + NAD(+) = 2-oxosuberate + CO2 + NADH. It functions in the pathway organic acid metabolism; 2-oxosuberate biosynthesis. Catalyzes the NAD-dependent oxidation and decarboxylation of (2R,3S)-homoisocitrate, (2R,3S)-homo(2)-isocitrate and (2R,3S)-homo(3)-isocitrate, into 2-oxoadipate, 2-oxopimelate (2-oxoheptanedioate), and 2-oxosuberate, respectively. All these substrates are intermediates in the biosynthesis of biotin and of 7-mercaptoheptanoate, a moiety of coenzyme B in methanoarchaea. Is also able to produce 2-oxoazelate from (2R,3S)-homo(4)-isocitrate in vitro, but this substrate is probably not physiologically relevant. Is unable to use any isomer of isocitrate or isopropylmalate as a substrate, and NADP as an oxidant. The sequence is that of Homoisocitrate dehydrogenase (aksF) from Methanocaldococcus jannaschii (strain ATCC 43067 / DSM 2661 / JAL-1 / JCM 10045 / NBRC 100440) (Methanococcus jannaschii).